The chain runs to 219 residues: Maleylacetoacetate isomerase (219 aa).

The GST N-terminal domain maps to 4 to 87; the sequence is NKTVLYSYWR…YLEETHPENP (84 aa). Residues 14 to 19, Gln45, 71 to 72, Gln111, and 115 to 117 contribute to the glutathione site; these read SSCSWR, QS, and NLK. The region spanning 92-217 is the GST C-terminal domain; that stretch reads GSYERAIARQ…LPQNQPDAEP (126 aa).

It belongs to the GST superfamily. Zeta family. The cofactor is glutathione.

The enzyme catalyses 4-maleylacetoacetate = 4-fumarylacetoacetate. Its pathway is amino-acid degradation; L-phenylalanine degradation; acetoacetate and fumarate from L-phenylalanine: step 5/6. The sequence is that of Maleylacetoacetate isomerase (mai) from Dictyostelium discoideum (Social amoeba).